A 174-amino-acid chain; its full sequence is Crossover junction endodeoxyribonuclease RuvC (174 aa).

Residues aspartate 8, glutamate 67, and aspartate 139 contribute to the active site. Mg(2+) is bound by residues aspartate 8, glutamate 67, and aspartate 139.

It belongs to the RuvC family. Homodimer which binds Holliday junction (HJ) DNA. The HJ becomes 2-fold symmetrical on binding to RuvC with unstacked arms; it has a different conformation from HJ DNA in complex with RuvA. In the full resolvosome a probable DNA-RuvA(4)-RuvB(12)-RuvC(2) complex forms which resolves the HJ. Mg(2+) serves as cofactor.

The protein localises to the cytoplasm. It catalyses the reaction Endonucleolytic cleavage at a junction such as a reciprocal single-stranded crossover between two homologous DNA duplexes (Holliday junction).. Its function is as follows. The RuvA-RuvB-RuvC complex processes Holliday junction (HJ) DNA during genetic recombination and DNA repair. Endonuclease that resolves HJ intermediates. Cleaves cruciform DNA by making single-stranded nicks across the HJ at symmetrical positions within the homologous arms, yielding a 5'-phosphate and a 3'-hydroxyl group; requires a central core of homology in the junction. The consensus cleavage sequence is 5'-(A/T)TT(C/G)-3'. Cleavage occurs on the 3'-side of the TT dinucleotide at the point of strand exchange. HJ branch migration catalyzed by RuvA-RuvB allows RuvC to scan DNA until it finds its consensus sequence, where it cleaves and resolves the cruciform DNA. In Pseudomonas putida (strain ATCC 700007 / DSM 6899 / JCM 31910 / BCRC 17059 / LMG 24140 / F1), this protein is Crossover junction endodeoxyribonuclease RuvC.